Here is a 195-residue protein sequence, read N- to C-terminus: NADH-quinone oxidoreductase subunit B (195 aa).

[4Fe-4S] cluster-binding residues include Cys-74, Cys-75, Cys-139, and Cys-169.

It belongs to the complex I 20 kDa subunit family. NDH-1 is composed of 14 different subunits. Subunits NuoB, C, D, E, F, and G constitute the peripheral sector of the complex. It depends on [4Fe-4S] cluster as a cofactor.

It localises to the cell inner membrane. It catalyses the reaction a quinone + NADH + 5 H(+)(in) = a quinol + NAD(+) + 4 H(+)(out). NDH-1 shuttles electrons from NADH, via FMN and iron-sulfur (Fe-S) centers, to quinones in the respiratory chain. The immediate electron acceptor for the enzyme in this species is believed to be ubiquinone. Couples the redox reaction to proton translocation (for every two electrons transferred, four hydrogen ions are translocated across the cytoplasmic membrane), and thus conserves the redox energy in a proton gradient. In Methylobacterium sp. (strain 4-46), this protein is NADH-quinone oxidoreductase subunit B.